The primary structure comprises 236 residues: Small ribosomal subunit protein eS6 (236 aa).

Belongs to the eukaryotic ribosomal protein eS6 family. Component of the small ribosomal subunit. Part of the small subunit (SSU) processome, composed of more than 70 proteins and the RNA chaperone small nucleolar RNA (snoRNA) U3. Ribosomal protein S6 is the major substrate of protein kinases in eukaryote ribosomes.

The protein localises to the cytoplasm. It is found in the nucleus. The protein resides in the nucleolus. In terms of biological role, component of the 40S small ribosomal subunit. Plays an important role in controlling cell growth and proliferation through the selective translation of particular classes of mRNA. Part of the small subunit (SSU) processome, first precursor of the small eukaryotic ribosomal subunit. During the assembly of the SSU processome in the nucleolus, many ribosome biogenesis factors, an RNA chaperone and ribosomal proteins associate with the nascent pre-rRNA and work in concert to generate RNA folding, modifications, rearrangements and cleavage as well as targeted degradation of pre-ribosomal RNA by the RNA exosome. The chain is Small ribosomal subunit protein eS6 (rps6) from Dictyostelium discoideum (Social amoeba).